We begin with the raw amino-acid sequence, 327 residues long: Tetraspanin-4 (327 aa).

Topologically, residues 1-6 (MRSRSN) are cytoplasmic. The chain crosses the membrane as a helical span at residues 7 to 27 (LIGLINFFTFLLSIPILGGGI). The Extracellular portion of the chain corresponds to 28–43 (WLSSRANSTDCLRFLQ). N-linked (GlcNAc...) asparagine glycosylation occurs at Asn-34. A helical transmembrane segment spans residues 44–64 (WPLIIIGISIMVISLAGIAGA). Residues 65–75 (CYQNKFLMWLY) lie on the Cytoplasmic side of the membrane. The helical transmembrane segment at 76–96 (LFTMFFVIAALIGFTIFAYVV) threads the bilayer. At 97–235 (TDKGSGRFVM…LGSLKKSWRK (139 aa)) the chain is on the extracellular side. An N-linked (GlcNAc...) asparagine glycan is attached at Asn-187. The chain crosses the membrane as a helical span at residues 236–256 (VSVINIVVVIILVIFYVIACA). Residues 257 to 287 (AYQNVKRMYNDEPVGEARMTNLILVIFKFKE) lie on the Cytoplasmic side of the membrane. A helical membrane pass occupies residues 288–308 (ILVQFFFGIVFLLLFNGLMVC). Residues 309–327 (CCNDKFAFSVFFFGYVTYA) are Extracellular-facing.

It belongs to the tetraspanin (TM4SF) family.

The protein resides in the membrane. In terms of biological role, may be involved in the regulation of cell differentiation. The sequence is that of Tetraspanin-4 (TET4) from Arabidopsis thaliana (Mouse-ear cress).